The following is a 185-amino-acid chain: Riboflavin kinase (185 aa).

Residues Thr41 and Asn43 each contribute to the Mg(2+) site. Glu122 serves as the catalytic Nucleophile.

The protein belongs to the flavokinase family. Requires Zn(2+) as cofactor. It depends on Mg(2+) as a cofactor.

It carries out the reaction riboflavin + ATP = FMN + ADP + H(+). It participates in cofactor biosynthesis; FMN biosynthesis; FMN from riboflavin (ATP route): step 1/1. In terms of biological role, catalyzes the phosphorylation of riboflavin (vitamin B2) to form flavin mononucleotide (FMN) coenzyme. In Kluyveromyces lactis (strain ATCC 8585 / CBS 2359 / DSM 70799 / NBRC 1267 / NRRL Y-1140 / WM37) (Yeast), this protein is Riboflavin kinase (FMN1).